The primary structure comprises 175 residues: Large ribosomal subunit protein uL6 (175 aa).

Belongs to the universal ribosomal protein uL6 family. Part of the 50S ribosomal subunit.

In terms of biological role, this protein binds to the 23S rRNA, and is important in its secondary structure. It is located near the subunit interface in the base of the L7/L12 stalk, and near the tRNA binding site of the peptidyltransferase center. This Xanthomonas axonopodis pv. citri (strain 306) protein is Large ribosomal subunit protein uL6.